The primary structure comprises 2844 residues: MSDDQATFNDEKAVAKHQVVAYTQRSQVKHENRHIQLVREYGFHPRTKASVEDGDVLPRKFEPFPEHMYGKPLEEIDTFIYEETFCVVSKRFRKNYIHRFTGTKSLFLFYPWSPARRVCVYIATNQFFDYCVMATILFNCIFLAMTETVEEAEYIFLAIYSIEMVIKIIAKGFLLNKYTYLRNPWNWLDFVVITSGYATIGMEVGNLAGLRTFRVLRALKTVSIMPGLKTIINALLHSFRQLAEVMTLTIFCLMVFALFALQVYMGELRNKCVRQVPTDWTNVSHTDWQIWVNDTDNWLYDEDELPVLCGNLTGARHCPFEYVCLCVGENPNHGYTNFDNFMWSMLTTFQLITLDYWENVYNMVLATCGPMSVSFFTVVVFFGSFYLINLMLAVVALSYEEEAEITNEERKKDLLDHRDDSTFSFDPSVLNVKKLNKNNKKKIDSRKGVLLASYSKKKTRRKKTKGGKEGGTNGNGNGSNGDDNKSHSATPSPGPSPRHSATERPSALTMQAQKQYQQMEQQHKLAKSGSGGSNNPMAPTPKGRISFQDSGMGVKNPNMLYPSDYKGQLIANSGQPSSNSSGVNRESSQDDSGVVDDHEEQDTTNDMGHVSTVELALSPREVRLIKCNGNIARIKNHNVYALHQEFSSEVVVIDDLPDRNCDRCVHWCTDYESWLQFQNCLYKVVRDPLFELAITLCIVLNTAFLAMEHHGMSESFRNALDVGNKVFTSIFTFECIVKLMALSKDFFLCGWNIFDLLIVTASLLDIIFELVDGLSVLRGLRLLRVLKLAQSWTTMKVLLSIIISTIGALGNLTLILVIVIYIFAVIGMQLFSKDYTPEKFDPDPVPRWNFNDFFHSFMMIFRILCGEWIEPLWDCMRAEEEQGASTCFAIFLPTLVMGNFMVLNLFLALLLNSFNSEELKSKKEEVGEESKLARSIERVRDLIRKKRQERKDRKERKFAEKFQQIVLDAQQAHAQTLSHQAAVGLERGDKPGVLAETKFHRLSYQESMNRPVSGSDFGFQIPLHDGLHTIVDGLEYDDTGDLPEQIQLQAHPLPPTSDSMPPTYESAMMATTGGSFSSVNGNGTCQNLTPFVQAERRLQHQISSGVSTQQYDSREEATYTESIELLGQYNSTDTDPYANDQRSGCGSFNRGDSLQDNSSRRYGSEEHDEAFLKYQKSLLTRSPSYRKSLDRLSQSSGQSQRSLLKSEEAEMRRHSSGQSLNSMSIEQDELLSQQGNLREELLNCDQKELFQFLQEEEELQKGTKLRRISNVMRSRRPSSQMGQPENETMVEHSEFDNIIQSFEKELEEIKRSTTSLERKLSNLSEPSPAADEATKAIMEHIAIITGASERSAADEVVLPLNPYDSYDLSSVPRRSQSVSAAAQRQSVKLKRRSLEKQRKIDEDFSISNEIRKICDQIHAPFVAMEAMAVAATSASQAQPNQSPFLRRKVDPFTVQFDRFKRLSLIERVEEVPEEEKPISTLRIESEKMPRKFLHGPDQLRLDSLSLKSTNSYENLLIQKQKLGMATPPAVPATPPTSLKSSIEPPTLAQISSLKTTPPLAALTEHQQHFHATSIQAAPTPAHTHAHSQAHAHSMAGQRRRMEHPQSTLDKAASFQSARTESHSSGAADASSALALAMAQKTEQSQSTAPDATQKPSAFTRLTEKPWHCLVSYVDDLTVGGRRNSQGAYNDPMTFPSYGATKAAKVPDDCFPQKCYDHFYFRCPWFMSCMDTQSAKHWTRVRTAVLTVVDTPAFEWFVLVLIFASSITLCFEDINLDKNKTLKRVLYWINFSFCLIFVVEMILKWLALGFSKYFTSFWTILDFIIVFVSVFSLLIEENENLKVLRSLRTLRALRPLRAISRWQGMRIVVNALMYAIPSIFNVLLVCLVFWLIFSIMGVQFFGGKFFKCVNEMGELLPITEVNDKWDCIEQNYTWINSKITFDHVGMGYLALLQVATFEGWMEVMADAVDARGVDLQPQREANLYAYIYFVIFIVCGSFFTLNLFIGVIIDNFNMLKKKYEGGVLEMFLTESQKHYYTAMKKLGRKKPQKVIKRPINHFLAMFYDLSNSRRFEIAIFVLIFLNMLTMGIEHYDQPHAVFFILEVSNAFFTTVFGLEAIVKIVGLRYHYFTVPWNVFDFLLVLASIFGILMEDIMIDLPISPTLLRVVRVFRIGRILRLIKAAKGIRKLLFALVVSLPALFNIGALLGLITFIYAILGMSLFGNVKLQGALDDMVNFQTFGRSMQLLFRLMTSAGWNDVLESLMIQPPDCDPFIHGHTNGNCGHPLLAITYFTSFIIISYMIVINMYIAIILENFNQAHQEEEIGIVEDDLEMFYIRWSKYDPHATQFIHFSQLSDFIASLDPPLGISKPNNVALVSFNLPISKGNKIHCLDILHALVKHVLGHVEETDNFKQLQEQMDVKFKKQFPTRKELEIVSSTRIWKRQEKAAKTIQTGWKEYLRRKREKERSNSGDSATQTSSPGGWQSKLSALNFFHLQVSRRGTACSSRASSRKSSRASDASDLSELAGPWLNLPLMLVSGADEVVKDIKQQNDELGKRGSIFVEAPRASRRRSFYNFFLRHQDAVDDSLTSPSVHRKTAMNNTTNTTSNSASTSGTASSTATAPATGCGPAATSASDSDRHQAVGGGSAPSRKRASSFIRKKPPLERGLSAQSALRVNKNAFVSEASAPEVIVTRPSPEQQTHPHSLSLRPDNATLVHVLVHRESEEYKEEDESSPSVSGNGNGFGVGLDMLSKQPPPQIRITTGSVESSMDTCAMPTVQIMVDSPKDPPRGDFSSAPIDDVGAPIDVNVQGDTSQVFYDYNPEKATDDQGNGQDETAQFESLPDRQR.

Topologically, residues 1–121 are cytoplasmic; that stretch reads MSDDQATFND…WSPARRVCVY (121 aa). The stretch at 107–434 is one I repeat; sequence FLFYPWSPAR…FDPSVLNVKK (328 aa). The helical transmembrane segment at 122 to 145 threads the bilayer; the sequence is IATNQFFDYCVMATILFNCIFLAM. Over 146–151 the chain is Extracellular; sequence TETVEE. The helical transmembrane segment at 152 to 172 threads the bilayer; sequence AEYIFLAIYSIEMVIKIIAKG. Residues 173 to 183 lie on the Cytoplasmic side of the membrane; that stretch reads FLLNKYTYLRN. Residues 184–202 form a helical membrane-spanning segment; it reads PWNWLDFVVITSGYATIGM. Residues 203 to 208 are Extracellular-facing; sequence EVGNLA. A helical; Voltage-sensor transmembrane segment spans residues 209–228; it reads GLRTFRVLRALKTVSIMPGL. Residues 229–244 are Cytoplasmic-facing; the sequence is KTIINALLHSFRQLAE. Residues 245–265 traverse the membrane as a helical segment; sequence VMTLTIFCLMVFALFALQVYM. Residues 266–340 are Extracellular-facing; the sequence is GELRNKCVRQ…PNHGYTNFDN (75 aa). The cysteines at positions 272 and 318 are disulfide-linked. N-linked (GlcNAc...) asparagine glycans are attached at residues asparagine 282, asparagine 293, and asparagine 311. An intramembrane region (pore-forming) is located at residues 341–365; sequence FMWSMLTTFQLITLDYWENVYNMVL. Over 366–374 the chain is Extracellular; the sequence is ATCGPMSVS. Residues 375-395 form a helical membrane-spanning segment; it reads FFTVVVFFGSFYLINLMLAVV. The Cytoplasmic segment spans residues 396-687; the sequence is ALSYEEEAEI…QNCLYKVVRD (292 aa). Residues 452-610 are disordered; it reads ASYSKKKTRR…QDTTNDMGHV (159 aa). Basic residues predominate over residues 455 to 465; that stretch reads SKKKTRRKKTK. Over residues 469 to 479 the composition is skewed to gly residues; the sequence is EGGTNGNGNGS. Composition is skewed to low complexity over residues 511–520 and 577–586; these read QAQKQYQQME and SSNSSGVNRE. The segment covering 593–603 has biased composition (acidic residues); it reads GVVDDHEEQDT. The II repeat unit spans residues 668–1130; that stretch reads CTDYESWLQF…ESIELLGQYN (463 aa). A helical membrane pass occupies residues 688-708; the sequence is PLFELAITLCIVLNTAFLAME. At 709–718 the chain is on the extracellular side; the sequence is HHGMSESFRN. Residues 719–743 form a helical membrane-spanning segment; sequence ALDVGNKVFTSIFTFECIVKLMALS. Residues 744–749 lie on the Cytoplasmic side of the membrane; sequence KDFFLC. A helical membrane pass occupies residues 750–769; it reads GWNIFDLLIVTASLLDIIFE. Residues 770 to 775 lie on the Extracellular side of the membrane; it reads LVDGLS. The helical; Voltage-sensor transmembrane segment at 776–795 threads the bilayer; the sequence is VLRGLRLLRVLKLAQSWTTM. Topologically, residues 796–810 are cytoplasmic; sequence KVLLSIIISTIGALG. Residues 811 to 832 form a helical membrane-spanning segment; that stretch reads NLTLILVIVIYIFAVIGMQLFS. Residues 833 to 852 are Extracellular-facing; that stretch reads KDYTPEKFDPDPVPRWNFND. An intramembrane region (pore-forming) is located at residues 853-873; it reads FFHSFMMIFRILCGEWIEPLW. The Extracellular portion of the chain corresponds to 874–889; that stretch reads DCMRAEEEQGASTCFA. A disulfide bridge connects residues cysteine 875 and cysteine 887. A helical transmembrane segment spans residues 890 to 910; it reads IFLPTLVMGNFMVLNLFLALL. At 911–1742 the chain is on the cytoplasmic side; it reads LNSFNSEELK…SAKHWTRVRT (832 aa). Residues 1129-1157 show a composition bias toward polar residues; that stretch reads YNSTDTDPYANDQRSGCGSFNRGDSLQDN. 5 disordered regions span residues 1129 to 1166, 1185 to 1224, 1268 to 1288, 1577 to 1630, and 1635 to 1654; these read YNSTDTDPYANDQRSGCGSFNRGDSLQDNSSRRYGSEE, YRKSLDRLSQSSGQSQRSLLKSEEAEMRRHSSGQSLNSMS, ISNVMRSRRPSSQMGQPENET, APTP…ADAS, and LAMAQKTEQSQSTAPDATQK. Low complexity predominate over residues 1191-1203; that stretch reads RLSQSSGQSQRSL. Over residues 1204–1213 the composition is skewed to basic and acidic residues; that stretch reads LKSEEAEMRR. 3 stretches are compositionally biased toward polar residues: residues 1277–1286, 1604–1618, and 1640–1654; these read PSSQMGQPEN, PQSTLDKAASFQSAR, and KTEQSQSTAPDATQK. Residues 1723-2040 form an III repeat; it reads PWFMSCMDTQ…QKHYYTAMKK (318 aa). The helical transmembrane segment at 1743–1763 threads the bilayer; that stretch reads AVLTVVDTPAFEWFVLVLIFA. Over 1764 to 1789 the chain is Extracellular; it reads SSITLCFEDINLDKNKTLKRVLYWIN. Residues asparagine 1778 and asparagine 1789 are each glycosylated (N-linked (GlcNAc...) asparagine). Residues 1790–1810 traverse the membrane as a helical segment; it reads FSFCLIFVVEMILKWLALGFS. Topologically, residues 1811 to 1813 are cytoplasmic; sequence KYF. The chain crosses the membrane as a helical span at residues 1814–1834; sequence TSFWTILDFIIVFVSVFSLLI. Residues 1835 to 1839 lie on the Extracellular side of the membrane; it reads EENEN. A helical; Voltage-sensor transmembrane segment spans residues 1840–1861; sequence LKVLRSLRTLRALRPLRAISRW. Over 1862–1880 the chain is Cytoplasmic; that stretch reads QGMRIVVNALMYAIPSIFN. The helical transmembrane segment at 1881-1902 threads the bilayer; the sequence is VLLVCLVFWLIFSIMGVQFFGG. Topologically, residues 1903 to 1943 are extracellular; the sequence is KFFKCVNEMGELLPITEVNDKWDCIEQNYTWINSKITFDHV. Asparagine 1930 carries N-linked (GlcNAc...) asparagine glycosylation. The pore-forming intramembrane region spans 1944-1965; sequence GMGYLALLQVATFEGWMEVMAD. Topologically, residues 1966–1981 are extracellular; that stretch reads AVDARGVDLQPQREAN. Residues 1982 to 2002 traverse the membrane as a helical segment; it reads LYAYIYFVIFIVCGSFFTLNL. The Cytoplasmic portion of the chain corresponds to 2003–2069; it reads FIGVIIDNFN…MFYDLSNSRR (67 aa). The stretch at 2050–2311 is one IV repeat; it reads IKRPINHFLA…NMYIAIILEN (262 aa). Residues 2070-2090 form a helical membrane-spanning segment; it reads FEIAIFVLIFLNMLTMGIEHY. Residues 2091-2095 lie on the Extracellular side of the membrane; that stretch reads DQPHA. A helical membrane pass occupies residues 2096 to 2116; sequence VFFILEVSNAFFTTVFGLEAI. At 2117–2132 the chain is on the cytoplasmic side; the sequence is VKIVGLRYHYFTVPWN. A helical membrane pass occupies residues 2133-2153; that stretch reads VFDFLLVLASIFGILMEDIMI. Residues 2154–2162 lie on the Extracellular side of the membrane; the sequence is DLPISPTLL. Residues 2163–2184 traverse the membrane as a helical; Voltage-sensor segment; it reads RVVRVFRIGRILRLIKAAKGIR. At 2185–2199 the chain is on the cytoplasmic side; sequence KLLFALVVSLPALFN. Residues 2200–2220 form a helical membrane-spanning segment; sequence IGALLGLITFIYAILGMSLFG. The Extracellular portion of the chain corresponds to 2221-2236; sequence NVKLQGALDDMVNFQT. The segment at residues 2237-2259 is an intramembrane region (pore-forming); it reads FGRSMQLLFRLMTSAGWNDVLES. At 2260–2288 the chain is on the extracellular side; that stretch reads LMIQPPDCDPFIHGHTNGNCGHPLLAITY. The chain crosses the membrane as a helical span at residues 2289–2309; sequence FTSFIIISYMIVINMYIAIIL. The Cytoplasmic segment spans residues 2310 to 2844; sequence ENFNQAHQEE…QFESLPDRQR (535 aa). An IQ domain is found at 2441-2470; that stretch reads QEKAAKTIQTGWKEYLRRKREKERSNSGDS. 4 disordered regions span residues 2457-2479, 2584-2668, 2780-2802, and 2818-2844; these read RRKREKERSNSGDSATQTSSPGG, SLTS…LSAQ, DSPKDPPRGDFSSAPIDDVGAPI, and NPEKATDDQGNGQDETAQFESLPDRQR. The segment covering 2467 to 2479 has biased composition (polar residues); that stretch reads SGDSATQTSSPGG. Over residues 2595–2632 the composition is skewed to low complexity; sequence AMNNTTNTTSNSASTSGTASSTATAPATGCGPAATSAS. Residues 2647-2658 are compositionally biased toward basic residues; that stretch reads SRKRASSFIRKK. The span at 2825–2836 shows a compositional bias: polar residues; sequence DQGNGQDETAQF.

This sequence belongs to the sodium channel (TC 1.A.1.10) family. NaCP60E subfamily. In terms of tissue distribution, in embryonic and larval stages, expression is limited to very few non-neuronal cells in either the CNS or PNS. In pupal and adult stages, expressed in cell bodies of the fly central nervous system, including optic lobes, central brain, subesophageal ganglion, thoracico-abdominal ganglion, major olfactory organs, the third antennal segment and the maxillary palps.

The protein localises to the cell membrane. Functionally, mediates the voltage-dependent sodium ion permeability of excitable membranes. Plays a role in processing of olfactory information during the olfactory avoidance response. This Drosophila melanogaster (Fruit fly) protein is Sodium channel protein 60E (NaCP60E).